A 197-amino-acid polypeptide reads, in one-letter code: MFEYPQGYKLIAGVDEVGRGPLVGAVVTAAVILDPHNPIEGLADSKKLSEKKRLALAEEIKEKARAWALGRAEADEIDEINILQASLLAMTRAVKSLKIQPHFVLIDGNKIPKDLAIPAQAVVKGDSLVAEISAASILAKVARDQEMEELDKQYPEYAFAQHKGYPTKLHLEKLAELGALPQHRRSFAPVKKALEQF.

Residues 9–197 (KLIAGVDEVG…APVKKALEQF (189 aa)) form the RNase H type-2 domain. Residues D15, E16, and D107 each coordinate a divalent metal cation.

It belongs to the RNase HII family. The cofactor is Mn(2+). Requires Mg(2+) as cofactor.

Its subcellular location is the cytoplasm. It carries out the reaction Endonucleolytic cleavage to 5'-phosphomonoester.. In terms of biological role, endonuclease that specifically degrades the RNA of RNA-DNA hybrids. The chain is Ribonuclease HII (rnhB) from Haemophilus influenzae (strain ATCC 51907 / DSM 11121 / KW20 / Rd).